We begin with the raw amino-acid sequence, 433 residues long: Methylenetetrahydrofolate--tRNA-(uracil-5-)-methyltransferase TrmFO (433 aa).

An FAD-binding site is contributed by 7–12 (GGGLAG).

The protein belongs to the MnmG family. TrmFO subfamily. It depends on FAD as a cofactor.

Its subcellular location is the cytoplasm. It carries out the reaction uridine(54) in tRNA + (6R)-5,10-methylene-5,6,7,8-tetrahydrofolate + NADH + H(+) = 5-methyluridine(54) in tRNA + (6S)-5,6,7,8-tetrahydrofolate + NAD(+). The enzyme catalyses uridine(54) in tRNA + (6R)-5,10-methylene-5,6,7,8-tetrahydrofolate + NADPH + H(+) = 5-methyluridine(54) in tRNA + (6S)-5,6,7,8-tetrahydrofolate + NADP(+). In terms of biological role, catalyzes the folate-dependent formation of 5-methyl-uridine at position 54 (M-5-U54) in all tRNAs. The sequence is that of Methylenetetrahydrofolate--tRNA-(uracil-5-)-methyltransferase TrmFO from Natranaerobius thermophilus (strain ATCC BAA-1301 / DSM 18059 / JW/NM-WN-LF).